The sequence spans 356 residues: Methylthioribose-1-phosphate isomerase (356 aa).

Substrate contacts are provided by residues 53–55 (RGA), Arg-97, and Gln-203. Asp-244 serves as the catalytic Proton donor. Position 254 to 255 (254 to 255 (NK)) interacts with substrate.

Belongs to the eIF-2B alpha/beta/delta subunits family. MtnA subfamily.

The enzyme catalyses 5-(methylsulfanyl)-alpha-D-ribose 1-phosphate = 5-(methylsulfanyl)-D-ribulose 1-phosphate. The protein operates within amino-acid biosynthesis; L-methionine biosynthesis via salvage pathway; L-methionine from S-methyl-5-thio-alpha-D-ribose 1-phosphate: step 1/6. Functionally, catalyzes the interconversion of methylthioribose-1-phosphate (MTR-1-P) into methylthioribulose-1-phosphate (MTRu-1-P). The protein is Methylthioribose-1-phosphate isomerase of Rhodopirellula baltica (strain DSM 10527 / NCIMB 13988 / SH1).